The sequence spans 161 residues: Dihydrofolate reductase type 1 from Tn4003 (161 aa).

The DHFR domain maps to threonine 2–arginine 157. A substrate-binding site is contributed by isoleucine 6 to alanine 8. NADP(+) is bound by residues valine 7–alanine 8 and isoleucine 15–glutamine 20. Residue aspartate 28 participates in substrate binding. Alanine 44 to threonine 47 lines the NADP(+) pocket. Arginine 58 contacts substrate. Residues leucine 63–glutamine 66 and phenylalanine 93–leucine 98 contribute to the NADP(+) site. Threonine 112 is a substrate binding site.

It belongs to the dihydrofolate reductase family.

It carries out the reaction (6S)-5,6,7,8-tetrahydrofolate + NADP(+) = 7,8-dihydrofolate + NADPH + H(+). Its pathway is cofactor biosynthesis; tetrahydrofolate biosynthesis; 5,6,7,8-tetrahydrofolate from 7,8-dihydrofolate: step 1/1. Functionally, key enzyme in folate metabolism. Catalyzes an essential reaction for de novo glycine and purine synthesis, and for DNA precursor synthesis. This chain is Dihydrofolate reductase type 1 from Tn4003 (dfrA), found in Staphylococcus aureus.